The chain runs to 331 residues: Beta-ketoacyl-[acyl-carrier-protein] synthase III (331 aa).

Active-site residues include C113 and H253. Positions 254-258 (QANTR) are ACP-binding. N283 is a catalytic residue.

The protein belongs to the thiolase-like superfamily. FabH family. In terms of assembly, homodimer.

Its subcellular location is the cytoplasm. The catalysed reaction is malonyl-[ACP] + acetyl-CoA + H(+) = 3-oxobutanoyl-[ACP] + CO2 + CoA. It participates in lipid metabolism; fatty acid biosynthesis. Its function is as follows. Catalyzes the condensation reaction of fatty acid synthesis by the addition to an acyl acceptor of two carbons from malonyl-ACP. Catalyzes the first condensation reaction which initiates fatty acid synthesis and may therefore play a role in governing the total rate of fatty acid production. Possesses both acetoacetyl-ACP synthase and acetyl transacylase activities. Its substrate specificity determines the biosynthesis of branched-chain and/or straight-chain of fatty acids. In Desulfitobacterium hafniense (strain Y51), this protein is Beta-ketoacyl-[acyl-carrier-protein] synthase III.